We begin with the raw amino-acid sequence, 306 residues long: MLSLAQLESWFFIAPALLLAVLSGYLAERVGIINIAINGGMVFGGLFMALLSYGFTNNLNQSAPSWSLFITIPLSVLFSSVIGCLFALAAVKLRADHVIVGTGINLLASGITLFISQNAASLFSDTTLRVRYLFPIQTTVSIEAIGVFVFSLLLIGFVWYLMSFTKTGLRYRAVGENPNVIDTQGISVYKYQWIGAICSMMVAGLSGSLFVLSVSNFPFNSGDVNGLGFIAIAIMIISMWRIIPSIFIGLIFAYAYVFTNSQIGSNSNSYLLRTIPFIISLLVMLLFGFLNVAPKNIGKHFDKGLR.

Helical transmembrane passes span 7 to 27 (LESW…GYLA), 30 to 50 (VGII…FMAL), 68 to 88 (LFIT…LFAL), 95 to 115 (ADHV…TLFI), 144 to 164 (AIGV…LMSF), 194 to 214 (IGAI…VLSV), 232 to 252 (IAIM…GLIF), and 274 to 294 (TIPF…NVAP).

The protein resides in the cell membrane. This is an uncharacterized protein from Mycoplasma genitalium (strain ATCC 33530 / DSM 19775 / NCTC 10195 / G37) (Mycoplasmoides genitalium).